Here is a 344-residue protein sequence, read N- to C-terminus: Ketol-acid reductoisomerase (NADP(+)) (344 aa).

Positions 2-181 constitute a KARI N-terminal Rossmann domain; it reads AKVLYEKDIQ…GAARAGVLET (180 aa). Residues 25–28, Arg48, Ser52, and 82–85 each bind NADP(+); these read YGSQ and DEMQ. Residue His107 is part of the active site. Gly133 provides a ligand contact to NADP(+). Residues 182-327 enclose the KARI C-terminal knotted domain; sequence SFQEETETDL…RELRELMPFV (146 aa). The Mg(2+) site is built by Asp190, Glu194, Glu226, and Glu230. A substrate-binding site is contributed by Ser251.

This sequence belongs to the ketol-acid reductoisomerase family. Mg(2+) serves as cofactor.

It catalyses the reaction (2R)-2,3-dihydroxy-3-methylbutanoate + NADP(+) = (2S)-2-acetolactate + NADPH + H(+). The catalysed reaction is (2R,3R)-2,3-dihydroxy-3-methylpentanoate + NADP(+) = (S)-2-ethyl-2-hydroxy-3-oxobutanoate + NADPH + H(+). The protein operates within amino-acid biosynthesis; L-isoleucine biosynthesis; L-isoleucine from 2-oxobutanoate: step 2/4. Its pathway is amino-acid biosynthesis; L-valine biosynthesis; L-valine from pyruvate: step 2/4. In terms of biological role, involved in the biosynthesis of branched-chain amino acids (BCAA). Catalyzes an alkyl-migration followed by a ketol-acid reduction of (S)-2-acetolactate (S2AL) to yield (R)-2,3-dihydroxy-isovalerate. In the isomerase reaction, S2AL is rearranged via a Mg-dependent methyl migration to produce 3-hydroxy-3-methyl-2-ketobutyrate (HMKB). In the reductase reaction, this 2-ketoacid undergoes a metal-dependent reduction by NADPH to yield (R)-2,3-dihydroxy-isovalerate. The protein is Ketol-acid reductoisomerase (NADP(+)) of Oceanobacillus iheyensis (strain DSM 14371 / CIP 107618 / JCM 11309 / KCTC 3954 / HTE831).